The sequence spans 281 residues: uncharacterized protein (281 aa).

Disordered regions lie at residues 192–212 (SNSSVNLSMDKKSDDSKIQET) and 227–281 (EDYV…SEEY). A compositionally biased stretch (basic and acidic residues) spans 200–211 (MDKKSDDSKIQE). Acidic residues-rich tracts occupy residues 227–240 (EDYVDGNEDCISDN) and 249–260 (DTDSDLGDLEDP).

This sequence belongs to the cullin family.

This is an uncharacterized protein from Acanthamoeba polyphaga (Amoeba).